We begin with the raw amino-acid sequence, 236 residues long: uncharacterized protein (236 aa).

Positions 1-29 (MNNEKNKQDRENLNRQDERKSSEIKSERK) are disordered.

This is an uncharacterized protein from Staphylococcus aureus.